The chain runs to 428 residues: Forkhead box protein B2 (428 aa).

The segment at residues 12-103 is a DNA-binding region (fork-head); sequence QKPPYSYISL…GDMFENGSFL (92 aa). Disordered regions lie at residues 118–217 and 408–428; these read HLHS…MQEA and PTAAGRADSKGSSLHSVLVHS. Over residues 136-163 the composition is skewed to basic residues; it reads LHPHHPHHAHHHHHHHHHAAHHHHHHHP. Pro residues-rich tracts occupy residues 164–174 and 183–192; these read PQPPPPPPPHM and APAPQPPHLP. The segment covering 193-217 has biased composition (low complexity); sequence SQPAQQPQPQSQPPQTSHPGKMQEA.

It is found in the nucleus. Functionally, transcription factor. This Mus musculus (Mouse) protein is Forkhead box protein B2 (Foxb2).